Reading from the N-terminus, the 506-residue chain is Acrylate reductase flavoprotein subunit (506 aa).

The tat-type signal signal peptide spans 1–30 (MSNKDLLGRRNFIKGMGAAAGVAMAAPALA). FAD is bound by residues Ala54, Glu74, Asn82, Gly87, and Gly88. Arg333 functions as the Proton donor in the catalytic mechanism. Residues Glu473 and Ile489 each contribute to the FAD site.

This sequence belongs to the FAD-dependent oxidoreductase 2 family. FRD/SDH subfamily. In terms of assembly, the ArdAB flavocytochrome c is composed of a FAD-containing subunit (ArdA) and a heme c-containing subunit (ArdB). The cofactor is FAD. In terms of processing, predicted to be exported by the Tat system. The position of the signal peptide cleavage has not been experimentally proven.

It is found in the periplasm. With respect to regulation, methacrylate acts as a competitive inhibitor of the acrylate reductase activity and suppresses the reductase activity in dose-dependent manner. FAD-containing subunit of the ArdAB flavocytochrome c, which catalyzes the reduction of acrylate to propanoate and supports dimethylsulfoniopropionate-dependent anaerobic respiration. In vitro, can use the artificial electron donor methyl viologen. The natural electron donor is probably a low-potential cytochrome c. Also shows weak activity toward methacrylate in vitro (at a 22-fold lower rate) but cannot use other tested 2-enoates, including crotonic, fumaric, sorbic, urocanic, cinnamic, p-coumaric, caffeic or ferulic acids. The protein catalyzes a unidirectional reaction and cannot oxidize propanoate with phenazine metasulfate and dichlorophenolindophenol as electron acceptors. The sequence is that of Acrylate reductase flavoprotein subunit from Shewanella woodyi (strain ATCC 51908 / MS32).